The following is a 450-amino-acid chain: GTPase Der (450 aa).

2 consecutive EngA-type G domains span residues 3–170 (PTIA…LATG) and 183–356 (LKIA…AECS). GTP contacts are provided by residues 9–16 (GRPNVGKS), 56–60 (DTGGL), 122–125 (NKVD), 189–196 (GRPNAGKS), 236–240 (DTAGV), and 301–304 (NKID). Residues 357 to 441 (LRISTGQLNR…PLNIVFRSTF (85 aa)) enclose the KH-like domain.

Belongs to the TRAFAC class TrmE-Era-EngA-EngB-Septin-like GTPase superfamily. EngA (Der) GTPase family. In terms of assembly, associates with the 50S ribosomal subunit.

GTPase that plays an essential role in the late steps of ribosome biogenesis. The sequence is that of GTPase Der from Maridesulfovibrio salexigens (strain ATCC 14822 / DSM 2638 / NCIMB 8403 / VKM B-1763) (Desulfovibrio salexigens).